The chain runs to 879 residues: Alanine--tRNA ligase (879 aa).

Residues His-566, His-570, Cys-668, and His-672 each coordinate Zn(2+).

It belongs to the class-II aminoacyl-tRNA synthetase family. The cofactor is Zn(2+).

The protein resides in the cytoplasm. The catalysed reaction is tRNA(Ala) + L-alanine + ATP = L-alanyl-tRNA(Ala) + AMP + diphosphate. Functionally, catalyzes the attachment of alanine to tRNA(Ala) in a two-step reaction: alanine is first activated by ATP to form Ala-AMP and then transferred to the acceptor end of tRNA(Ala). Also edits incorrectly charged Ser-tRNA(Ala) and Gly-tRNA(Ala) via its editing domain. The chain is Alanine--tRNA ligase from Listeria monocytogenes serotype 4b (strain F2365).